Consider the following 292-residue polypeptide: Histamine N-methyltransferase (292 aa).

Glutamate 28 lines the substrate pocket. The S-adenosyl-L-methionine site is built by glycine 60, glutamate 89, and isoleucine 142. Asparagine 283 provides a ligand contact to substrate.

Belongs to the class I-like SAM-binding methyltransferase superfamily. HNMT family. In terms of assembly, monomer.

The protein resides in the cytoplasm. It carries out the reaction histamine + S-adenosyl-L-methionine = N(tau)-methylhistamine + S-adenosyl-L-homocysteine + H(+). Its function is as follows. Inactivates histamine by N-methylation. Plays an important role in degrading histamine and in regulating the airway response to histamine. The polypeptide is Histamine N-methyltransferase (hnmt) (Danio rerio (Zebrafish)).